Here is a 311-residue protein sequence, read N- to C-terminus: Lipid A biosynthesis acyltransferase (311 aa).

A helical membrane pass occupies residues 19 to 39 (WLFWLGVAIWRSILCLPYPIL). Residues 134-139 (HFLTLE) carry the HXXXXD motif motif.

This sequence belongs to the LpxL/LpxM/LpxP family.

The protein localises to the cell inner membrane. The catalysed reaction is an alpha-Kdo-(2-&gt;4)-alpha-Kdo-(2-&gt;6)-lipid IVA + a fatty acyl-[ACP] = an alpha-Kdo-(2-&gt;4)-alpha-Kdo-(2-&gt;6)-(acyl)-lipid IVA + holo-[ACP]. It participates in glycolipid biosynthesis; KDO(2)-lipid A biosynthesis; KDO(2)-lipid A from CMP-3-deoxy-D-manno-octulosonate and lipid IV(A): step 3/4. Its pathway is bacterial outer membrane biogenesis; lipopolysaccharide biosynthesis. Catalyzes the transfer of an acyl chain from an acyl-[acyl-carrier-protein] (ACP) to a Kdo(2)-lipid IV(A) to form a Kdo(2)-(acyl)-lipid IV(A). The protein is Lipid A biosynthesis acyltransferase of Haemophilus influenzae (strain ATCC 51907 / DSM 11121 / KW20 / Rd).